We begin with the raw amino-acid sequence, 253 residues long: 4-hydroxy-tetrahydrodipicolinate reductase (253 aa).

NAD(+) is bound at residue 16 to 21 (GDTGRM). Residue Arg44 participates in NADP(+) binding. NAD(+)-binding positions include 85 to 87 (GTT) and 111 to 114 (CANT). The active-site Proton donor/acceptor is the His144. (S)-2,3,4,5-tetrahydrodipicolinate is bound at residue His145. The Proton donor role is filled by Lys148. 154–155 (GT) is a binding site for (S)-2,3,4,5-tetrahydrodipicolinate.

This sequence belongs to the DapB family.

Its subcellular location is the cytoplasm. It catalyses the reaction (S)-2,3,4,5-tetrahydrodipicolinate + NAD(+) + H2O = (2S,4S)-4-hydroxy-2,3,4,5-tetrahydrodipicolinate + NADH + H(+). It carries out the reaction (S)-2,3,4,5-tetrahydrodipicolinate + NADP(+) + H2O = (2S,4S)-4-hydroxy-2,3,4,5-tetrahydrodipicolinate + NADPH + H(+). It functions in the pathway amino-acid biosynthesis; L-lysine biosynthesis via DAP pathway; (S)-tetrahydrodipicolinate from L-aspartate: step 4/4. In terms of biological role, catalyzes the conversion of 4-hydroxy-tetrahydrodipicolinate (HTPA) to tetrahydrodipicolinate. The sequence is that of 4-hydroxy-tetrahydrodipicolinate reductase from Chlamydia trachomatis serovar A (strain ATCC VR-571B / DSM 19440 / HAR-13).